The following is a 277-amino-acid chain: 4-hydroxybenzoate octaprenyltransferase (277 aa).

A run of 8 helical transmembrane segments spans residues 24 to 44 (FAAA…LGVI), 81 to 101 (VEAK…DLSL), 102 to 122 (NQYA…YPFM), 129 to 149 (PQVV…GAVI), 152 to 172 (LPLT…AYDT), 201 to 221 (IIAL…WLSE), 224 to 244 (IGYF…CWLT), and 255 to 275 (AFLN…VGIY).

The protein belongs to the UbiA prenyltransferase family. Requires Mg(2+) as cofactor.

It is found in the cell inner membrane. The enzyme catalyses all-trans-octaprenyl diphosphate + 4-hydroxybenzoate = 4-hydroxy-3-(all-trans-octaprenyl)benzoate + diphosphate. The protein operates within cofactor biosynthesis; ubiquinone biosynthesis. Its function is as follows. Catalyzes the prenylation of para-hydroxybenzoate (PHB) with an all-trans polyprenyl group. Mediates the second step in the final reaction sequence of ubiquinone-8 (UQ-8) biosynthesis, which is the condensation of the polyisoprenoid side chain with PHB, generating the first membrane-bound Q intermediate 3-octaprenyl-4-hydroxybenzoate. This Haemophilus ducreyi (strain 35000HP / ATCC 700724) protein is 4-hydroxybenzoate octaprenyltransferase.